We begin with the raw amino-acid sequence, 349 residues long: Hydroxymethylglutaryl-CoA synthase (349 aa).

Residues Asp-30 and Ala-31 each contribute to the (3S)-3-hydroxy-3-methylglutaryl-CoA site. Glu-82 acts as the Proton donor/acceptor in catalysis. The (3S)-3-hydroxy-3-methylglutaryl-CoA site is built by Cys-114 and Thr-155. The Acyl-thioester intermediate role is filled by Cys-114. Arg-203 is a CoA binding site. The (3S)-3-hydroxy-3-methylglutaryl-CoA site is built by Thr-205 and His-238. Catalysis depends on His-238, which acts as the Proton donor/acceptor. Lys-243 contacts CoA. (3S)-3-hydroxy-3-methylglutaryl-CoA is bound by residues Asn-270 and Ser-300.

This sequence belongs to the thiolase-like superfamily. Archaeal HMG-CoA synthase family. As to quaternary structure, interacts with acetoacetyl-CoA thiolase that catalyzes the precedent step in the pathway and with a DUF35 protein. The acetoacetyl-CoA thiolase/HMG-CoA synthase complex channels the intermediate via a fused CoA-binding site, which allows for efficient coupling of the endergonic thiolase reaction with the exergonic HMGCS reaction.

It carries out the reaction acetoacetyl-CoA + acetyl-CoA + H2O = (3S)-3-hydroxy-3-methylglutaryl-CoA + CoA + H(+). It functions in the pathway metabolic intermediate biosynthesis; (R)-mevalonate biosynthesis; (R)-mevalonate from acetyl-CoA: step 2/3. Catalyzes the condensation of acetyl-CoA with acetoacetyl-CoA to form 3-hydroxy-3-methylglutaryl-CoA (HMG-CoA). Functions in the mevalonate (MVA) pathway leading to isopentenyl diphosphate (IPP), a key precursor for the biosynthesis of isoprenoid compounds that are building blocks of archaeal membrane lipids. The sequence is that of Hydroxymethylglutaryl-CoA synthase from Methanococcus maripaludis (strain C7 / ATCC BAA-1331).